The following is a 173-amino-acid chain: Mesencephalic astrocyte-derived neurotrophic factor homolog (173 aa).

The signal sequence occupies residues 1–22 (MNTSQIVLMFCLVVGVAQTALA). Intrachain disulfides connect Cys28–Cys114, Cys31–Cys103, Cys61–Cys72, and Cys148–Cys151.

This sequence belongs to the ARMET family.

It localises to the secreted. Required during the maturation of the embryonic nervous system for maintenance of neuronal and cuticular connectivity. Essential for maintenance of dopaminergic neurons and dopamine levels. This chain is Mesencephalic astrocyte-derived neurotrophic factor homolog, found in Drosophila grimshawi (Hawaiian fruit fly).